The primary structure comprises 905 residues: DNA gyrase subunit A (905 aa).

Residues 35–524 (IPDVRDGLKP…GEFDQDIEDL (490 aa)) form the Topo IIA-type catalytic domain. Tyrosine 123 (O-(5'-phospho-DNA)-tyrosine intermediate) is an active-site residue. The GyrA-box motif lies at 551–557 (QKRGGKG). The segment at 882–905 (IAESSDDNEEDSEFEEEVAEEGSE) is disordered. Acidic residues predominate over residues 885-905 (SSDDNEEDSEFEEEVAEEGSE).

This sequence belongs to the type II topoisomerase GyrA/ParC subunit family. As to quaternary structure, heterotetramer, composed of two GyrA and two GyrB chains. In the heterotetramer, GyrA contains the active site tyrosine that forms a transient covalent intermediate with DNA, while GyrB binds cofactors and catalyzes ATP hydrolysis.

The protein resides in the cytoplasm. It catalyses the reaction ATP-dependent breakage, passage and rejoining of double-stranded DNA.. Functionally, a type II topoisomerase that negatively supercoils closed circular double-stranded (ds) DNA in an ATP-dependent manner to modulate DNA topology and maintain chromosomes in an underwound state. Negative supercoiling favors strand separation, and DNA replication, transcription, recombination and repair, all of which involve strand separation. Also able to catalyze the interconversion of other topological isomers of dsDNA rings, including catenanes and knotted rings. Type II topoisomerases break and join 2 DNA strands simultaneously in an ATP-dependent manner. This Rickettsia bellii (strain RML369-C) protein is DNA gyrase subunit A.